The chain runs to 383 residues: MDAPTVGVEEEFLLVDPRTGAPTARNEAVAHTAGELGIDLQLELTRCQVETSTAVHSDIGALFGQLRDLRCGVARCAQANESRLLAVAIPPTVPHEFPVTDTPRYRRIAESFGMIAHEQGLCGCHVHVAVPDRETAVQVSNYLRPWLPMLLALTANSAIYRGSDTGYASWRSILWRRWPSAGPPPYFRTAADYDAMVTMMLSSGIVLDEKMVYWDARPSINYPTIEVRVSDVPATVGETVLLAALVRATVHTARRFLAEGNTAPAVPAEVLRAAYWKAARSGIGGDAVAPLDGRVLPARDLLDELLETVDPALEELGDRGFVSDALTALLARGNGAQRQVRAFGADHDVAAVIAELGAATLEGCAPEPANSGGGEHVPVEGRH.

This sequence belongs to the glutamate--cysteine ligase type 2 family. YbdK subfamily.

The enzyme catalyses L-cysteine + L-glutamate + ATP = gamma-L-glutamyl-L-cysteine + ADP + phosphate + H(+). Functionally, ATP-dependent carboxylate-amine ligase which exhibits weak glutamate--cysteine ligase activity. The protein is Putative glutamate--cysteine ligase 2-1 of Nocardia farcinica (strain IFM 10152).